The following is a 720-amino-acid chain: Protein unc-112 (720 aa).

Disordered regions lie at residues 145 to 170 (DLRR…ESVG) and 210 to 236 (MGTL…TMRR). The region spanning 288–614 (WLDSSRSLME…ALPEHGIHYF (327 aa)) is the FERM domain. Residues 402–507 (VPELADYLKY…WMAACRLASR (106 aa)) enclose the PH domain.

The protein belongs to the kindlin family. As to quaternary structure, interacts with pat-4/ILK. Probably forms a complex with pat-4 and pat-6. Component of an integrin containing attachment complex, composed of at least pat-2, pat-3, pat-4, pat-6, unc-52, unc-97 and unc-112. Mainly expressed in muscle cells in both embryos and adults.

It is found in the cell membrane. The protein localises to the cytoplasm. Its subcellular location is the myofibril. The protein resides in the sarcomere. It localises to the m line. In terms of biological role, component of an integrin containing attachment complex, which is required for muscle development and maintenance. Probable regulator of cell-extracellular matrix adhesion. Required during initial muscle assembly to form dense bodies and M-lines. This Caenorhabditis elegans protein is Protein unc-112.